A 458-amino-acid polypeptide reads, in one-letter code: MSITKEFDTITAISTPLGEGAIGIVRLSGTDALAIAQSVFKGKSLEQVASHTINYGHIIDPKTGTIIDEVMVSVMLAPKTFTRENVVEINTHGGIAVTNEILQLLIRQGARMAEPGEFTKRAFLNGRVDLTQAEAVMDIIRAKTDKAMTIAVKQLDGSLSQLINDTRQEILNTLAQVEVNIDYPEYDDVEEMTTALLREKTQEFQSLLENLLRTAKRGKILREGLSTAIIGRPNVGKSSLLNNLLREDKAIVTDIAGTTRDVIEEYVNIKGVPLKLVDTAGIRETDDLVEQIGVERSKKALQEADLVLLVLNASEKLTDQDRALLNLSQDSNRIILLNKTDLEQKIELEQLPDDYIPISVLTNQNINLIEDRINQLFFDNAGLVEQDATYLSNARHISLIEKAVQSLEAVNDGLALGMPVDLLQVDLTRTWEILGEITGDAAPDELITQLFSQFCLGK.

(6S)-5-formyl-5,6,7,8-tetrahydrofolate is bound by residues R26, E88, and R127. Positions G224 to F378 constitute a TrmE-type G domain. N234 contributes to the K(+) binding site. GTP is bound by residues N234 to S239, T253 to T259, and D278 to G281. S238 provides a ligand contact to Mg(2+). Residues T253, I255, and T258 each contribute to the K(+) site. T259 lines the Mg(2+) pocket. (6S)-5-formyl-5,6,7,8-tetrahydrofolate is bound at residue K458.

This sequence belongs to the TRAFAC class TrmE-Era-EngA-EngB-Septin-like GTPase superfamily. TrmE GTPase family. Homodimer. Heterotetramer of two MnmE and two MnmG subunits. The cofactor is K(+).

Its subcellular location is the cytoplasm. Its function is as follows. Exhibits a very high intrinsic GTPase hydrolysis rate. Involved in the addition of a carboxymethylaminomethyl (cmnm) group at the wobble position (U34) of certain tRNAs, forming tRNA-cmnm(5)s(2)U34. The sequence is that of tRNA modification GTPase MnmE from Streptococcus pyogenes serotype M5 (strain Manfredo).